The following is a 232-amino-acid chain: Lipoprotein-releasing system ATP-binding protein LolD (232 aa).

The ABC transporter domain occupies 11-232 (IEVTDLQRAF…LHDGRLIEEY (222 aa)). 47–54 (GPSGAGKS) contributes to the ATP binding site.

This sequence belongs to the ABC transporter superfamily. Lipoprotein translocase (TC 3.A.1.125) family. In terms of assembly, the complex is composed of two ATP-binding proteins (LolD) and two transmembrane proteins (LolC and LolE).

It is found in the cell inner membrane. Functionally, part of the ABC transporter complex LolCDE involved in the translocation of mature outer membrane-directed lipoproteins, from the inner membrane to the periplasmic chaperone, LolA. Responsible for the formation of the LolA-lipoprotein complex in an ATP-dependent manner. The protein is Lipoprotein-releasing system ATP-binding protein LolD of Zymomonas mobilis subsp. mobilis (strain ATCC 10988 / DSM 424 / LMG 404 / NCIMB 8938 / NRRL B-806 / ZM1).